The sequence spans 348 residues: UDP-N-acetyl-alpha-D-glucosaminouronate 4-epimerase (348 aa).

Residues Phe26, Ile27, Asp46, Thr50, Gly51, Asp77, Ile78, Gln97, Tyr165, Lys169, and Val195 each contribute to the NAD(+) site. The active-site Proton acceptor is the Tyr165.

This sequence belongs to the NAD(P)-dependent epimerase/dehydratase family. Homodimer. It depends on NAD(+) as a cofactor.

The catalysed reaction is UDP-2-acetamido-2-deoxy-alpha-D-glucuronate = UDP-2-acetamido-2-deoxy-alpha-D-galacturonate. It catalyses the reaction UDP-N-acetyl-alpha-D-glucosamine = UDP-N-acetyl-alpha-D-galactosamine. It participates in capsule biogenesis; capsule polysaccharide biosynthesis. Its pathway is glycan metabolism; Vi-antigen biosynthesis. Functionally, epimerase required for the biosynthesis of the capsular polysaccharide, commonly referred as the Vi antigen, an important virulence factor. Catalyzes the reversible epimerization of UDP-N-acetylglucosaminuronic acid (UDP-GlcNAcA) to UDP-N-acetylgalactosaminuronic acid (UDP-GalNAcA). Also catalyzes, with lower efficiency, the reversible epimerization of UDP-N-acetylglucosamine (UDP-GlcNAc) to UDP-N-acetylgalactosamine (UDP-GalNAc). Cannot use UDP-glucose (UDP-Glc) and UDP-galactose (UDP-Gal) as substrates. This Salmonella typhi protein is UDP-N-acetyl-alpha-D-glucosaminouronate 4-epimerase.